Reading from the N-terminus, the 336-residue chain is 4-hydroxy-3-methylbut-2-enyl diphosphate reductase (336 aa).

C37 contributes to the [4Fe-4S] cluster binding site. H66 and H99 together coordinate (2E)-4-hydroxy-3-methylbut-2-enyl diphosphate. Dimethylallyl diphosphate-binding residues include H66 and H99. Isopentenyl diphosphate is bound by residues H66 and H99. C121 contributes to the [4Fe-4S] cluster binding site. H149 is a binding site for (2E)-4-hydroxy-3-methylbut-2-enyl diphosphate. H149 contributes to the dimethylallyl diphosphate binding site. H149 is a binding site for isopentenyl diphosphate. Residue E151 is the Proton donor of the active site. Residue T189 participates in (2E)-4-hydroxy-3-methylbut-2-enyl diphosphate binding. C219 is a binding site for [4Fe-4S] cluster. (2E)-4-hydroxy-3-methylbut-2-enyl diphosphate-binding residues include S247, S248, N249, and S292. Residues S247, S248, N249, and S292 each coordinate dimethylallyl diphosphate. Residues S247, S248, N249, and S292 each contribute to the isopentenyl diphosphate site.

It belongs to the IspH family. [4Fe-4S] cluster is required as a cofactor.

It catalyses the reaction isopentenyl diphosphate + 2 oxidized [2Fe-2S]-[ferredoxin] + H2O = (2E)-4-hydroxy-3-methylbut-2-enyl diphosphate + 2 reduced [2Fe-2S]-[ferredoxin] + 2 H(+). The enzyme catalyses dimethylallyl diphosphate + 2 oxidized [2Fe-2S]-[ferredoxin] + H2O = (2E)-4-hydroxy-3-methylbut-2-enyl diphosphate + 2 reduced [2Fe-2S]-[ferredoxin] + 2 H(+). Its pathway is isoprenoid biosynthesis; dimethylallyl diphosphate biosynthesis; dimethylallyl diphosphate from (2E)-4-hydroxy-3-methylbutenyl diphosphate: step 1/1. It functions in the pathway isoprenoid biosynthesis; isopentenyl diphosphate biosynthesis via DXP pathway; isopentenyl diphosphate from 1-deoxy-D-xylulose 5-phosphate: step 6/6. In terms of biological role, catalyzes the conversion of 1-hydroxy-2-methyl-2-(E)-butenyl 4-diphosphate (HMBPP) into a mixture of isopentenyl diphosphate (IPP) and dimethylallyl diphosphate (DMAPP). Acts in the terminal step of the DOXP/MEP pathway for isoprenoid precursor biosynthesis. The polypeptide is 4-hydroxy-3-methylbut-2-enyl diphosphate reductase (Nocardia farcinica (strain IFM 10152)).